The sequence spans 680 residues: Dihydroxyacetone phosphate acyltransferase (680 aa).

Phosphoserine is present on residues serine 12 and serine 17. Positions 162 to 167 (HRSYID) match the HXXXXD motif motif. Lysine 643 carries the post-translational modification N6-acetyllysine. The short motif at 678–680 (AKL) is the Microbody targeting signal element.

The protein belongs to the GPAT/DAPAT family. In terms of assembly, part of a heterotrimeric complex composed of GNPAT, AGPS and a modified form of GNPAT.

It localises to the peroxisome membrane. The enzyme catalyses dihydroxyacetone phosphate + an acyl-CoA = a 1-acylglycerone 3-phosphate + CoA. The catalysed reaction is dihydroxyacetone phosphate + hexadecanoyl-CoA = 1-hexadecanoylglycerone 3-phosphate + CoA. The protein operates within membrane lipid metabolism; glycerophospholipid metabolism. Its function is as follows. Dihydroxyacetonephosphate acyltransferase catalyzing the first step in the biosynthesis of plasmalogens, a subset of phospholipids that differ from other glycerolipids by having an alkyl chain attached through a vinyl ether linkage at the sn-1 position of the glycerol backbone, and which unique physical properties have an impact on various aspects of cell signaling and membrane biology. The sequence is that of Dihydroxyacetone phosphate acyltransferase from Homo sapiens (Human).